The sequence spans 1209 residues: MARRSQSSSQGDNPLAPGYLPPHYKEYYRLAVDALTEGGPEAYNRFLASEGAPDFLCPEELEHVSRHLQPPQYVAREPPEGTPSDVDMDGSSGTYWPVNSDQAVPELDLGWPLTFGFQGTEVTTLVQPPPPDSPSIKDEARRMIRSAQQVVAVVMDMFTDVDLLSEVLEAAARRVPVYILLDEMNAQHFLDMADKCRVNLHHVDFLRVRTVAGPTYYCRTGKSFKGHLKEKFLLVDCAVVMSGSYSFMWSFEKIHRSLAHVFQGELVSSFDEEFRILFAQSEPLVPSAGALARMDAYALAPYSGAGPLVGVPGVGAPTPFSFPKRAHLLFPPPREEGLGFPSFLDPDRHFLSAFRREELQRMPGGALEPHTGLRPLARPTEAGPFGELAGPRGFFQSRHLEMDAFKRHSYATPDGAGAVENFAAARQVSRQTFLSHGDDFRFQTSHFQRDQLYQQHYQWDPQFAPARPQGLFEKLRAGRPGFADPDDFALGAGHRFPELGADVHQRLEYVPSSASREVRHGSDPAFGPSPRGLEPSGASRPNLGQRFPCQATLRQGLDTASEAEPERRGGPEGRAGLRHWRLASYLSGCHGDGGEEGLPMEAEACEDEVLAPGGRDLLPSAFRTPAAFPAKGPKPGSGSGGGDSSEREGPEETSLAKQDSFRSRLNPLIQRSSRLRSSLIFASQAEGAVGTAAATTEKVQLMHKEQTVSETLGPSGEAVRSSASAKVAELLEKYKGPARDPGGAGGAVTSSSHSKAVVSQAWREEVVAPGGAGTERRSLESCLLDLRDSFAQQLHQEAERHPGAASLTAAQLLDTLGGTDRLPSRFLSAQGRSLSPQGRDSPPPEGLGTHQLPYSEPKGNPTPAYPERKGSPTPAYPERKGSPTPAYPERKGSPTPAYPERKGSPTQAYPERKGSPTSGFPNRRGSPTTGLMEQKGSPTSTYPDRRGSPVPPVPERRGSPVPPVPERRGSLTFAGESSKTGPTEEVSSGPMEVLRKGSLRLRQLLSPKNERRGEDEGSFPTPQENGQPESPRRPSLSRGDSTEAAAEERGSRVRLASATANALYSSNLRDDTKAILEQISAHGQKHRGVPAPGPAHSSPDVGRPTTAGDLAPDMSDKDKCSAIFRSDSLGTQGRLSRTLPGSAEERDRLLRRMESMRKEKRVYSRFEVFCKKDEAGSSGAGDNLADEDTRDSKMGKFVPKILGTFKSKK.

The interval 1-286 is DUF1669; it reads MARRSQSSSQ…LFAQSEPLVP (286 aa). The mediates interaction with CSNK1A1 and is required for FAM83H activity in keratin cytoskeleton organization stretch occupies residues 1 to 286; that stretch reads MARRSQSSSQ…LFAQSEPLVP (286 aa). A phosphoserine mark is found at Ser512, Ser513, Ser515, Ser522, Ser639, and Ser660. Disordered regions lie at residues 512–545, 615–664, and 735–760; these read SSASREVRHGSDPAFGPSPRGLEPSGASRPNLGQ, RDLL…FRSR, and KGPARDPGGAGGAVTSSSHSKAVVSQ. Thr749 carries the phosphothreonine modification. A phosphoserine mark is found at Ser752, Ser778, Ser806, and Ser871. The tract at residues 829-1056 is disordered; sequence AQGRSLSPQG…EERGSRVRLA (228 aa). Thr873 carries the phosphothreonine modification. Phosphoserine is present on residues Ser882, Ser893, Ser904, and Ser915. Over residues 915–942 the composition is skewed to polar residues; sequence SPTSGFPNRRGSPTTGLMEQKGSPTSTY. At Thr917 the chain carries Phosphothreonine. Ser926 carries the post-translational modification Phosphoserine. Thr928 bears the Phosphothreonine mark. 8 positions are modified to phosphoserine: Ser937, Ser948, Ser959, Ser970, Ser977, Ser1035, Ser1041, and Ser1057. Phosphothreonine is present on Thr1072. Disordered regions lie at residues 1076–1147 and 1174–1193; these read LEQI…EERD and EAGSSGAGDNLADEDTRDSK. Phosphoserine is present on residues Ser1080, Ser1098, and Ser1177.

This sequence belongs to the FAM83 family. In terms of assembly, directly interacts (via DUF1669) with casein kinase isoforms CSNK1A1, CSNK1A1L, CSNK1D and CSNK1E. Interaction with CSNK1A1 recruits CSNK1A1 to keratin filaments. Interacts with KRT18 and probably other keratins. Expressed in tooth follicle, eye, liver and kidney.

It is found in the cytoplasm. Its subcellular location is the cytoskeleton. May play a major role in the structural organization and calcification of developing enamel. May play a role in keratin cytoskeleton disassembly by recruiting CSNK1A1 to keratin filaments. Thereby, it may regulate epithelial cell migration. The protein is Protein FAM83H of Mus musculus (Mouse).